The chain runs to 224 residues: DNA repair and recombination protein RadB (224 aa).

Belongs to the eukaryotic RecA-like protein family. RadB subfamily.

Functionally, involved in DNA repair and in homologous recombination. May regulate the cleavage reactions of the branch-structured DNA. Has a very weak ATPase activity that is not stimulated by DNA. Binds DNA but does not promote DNA strands exchange. The polypeptide is DNA repair and recombination protein RadB (Methanoculleus marisnigri (strain ATCC 35101 / DSM 1498 / JR1)).